Here is a 379-residue protein sequence, read N- to C-terminus: Alkanesulfonate monooxygenase (379 aa).

Belongs to the SsuD family.

The catalysed reaction is an alkanesulfonate + FMNH2 + O2 = an aldehyde + FMN + sulfite + H2O + 2 H(+). Its function is as follows. Catalyzes the desulfonation of aliphatic sulfonates. The sequence is that of Alkanesulfonate monooxygenase from Pseudomonas savastanoi pv. phaseolicola (strain 1448A / Race 6) (Pseudomonas syringae pv. phaseolicola (strain 1448A / Race 6)).